An 89-amino-acid polypeptide reads, in one-letter code: Large ribosomal subunit protein bL27 (89 aa).

The disordered stretch occupies residues 1-22; that stretch reads MAHTKKGGSSRNGRDSESKRLG.

The protein belongs to the bacterial ribosomal protein bL27 family.

This Brucella melitensis biotype 1 (strain ATCC 23456 / CCUG 17765 / NCTC 10094 / 16M) protein is Large ribosomal subunit protein bL27.